The chain runs to 863 residues: Nitrate reductase [NADH] (863 aa).

Residue C137 participates in Mo-molybdopterin binding. Positions 484–559 (KKYVTKAMLE…LEQFYIAELA (76 aa)) constitute a Cytochrome b5 heme-binding domain. 2 residues coordinate heme: H519 and H542. Residues 602–719 (KKQKAAELKE…KGPIGHFHYD (118 aa)) form the FAD-binding FR-type domain. FAD contacts are provided by residues 659 to 662 (RAYT), 676 to 680 (VVKIY), F688, 693 to 695 (KFS), and T746.

The protein belongs to the nitrate reductase family. Homodimer. FAD is required as a cofactor. The cofactor is Mo-molybdopterin. Heme serves as cofactor.

It catalyses the reaction nitrite + NAD(+) + H2O = nitrate + NADH + H(+). Nitrate reductase is a key enzyme involved in the first step of nitrate assimilation in plants, fungi and bacteria. In Ulva prolifera (Green seaweed), this protein is Nitrate reductase [NADH].